Here is a 476-residue protein sequence, read N- to C-terminus: UDP-N-acetylmuramate--L-alanine ligase (476 aa).

107-113 provides a ligand contact to ATP; that stretch reads GTHGKTT.

It belongs to the MurCDEF family.

The protein resides in the cytoplasm. The enzyme catalyses UDP-N-acetyl-alpha-D-muramate + L-alanine + ATP = UDP-N-acetyl-alpha-D-muramoyl-L-alanine + ADP + phosphate + H(+). Its pathway is cell wall biogenesis; peptidoglycan biosynthesis. Its function is as follows. Cell wall formation. The protein is UDP-N-acetylmuramate--L-alanine ligase of Roseiflexus castenholzii (strain DSM 13941 / HLO8).